We begin with the raw amino-acid sequence, 2065 residues long: Cytoskeleton-associated protein 5-A (2065 aa).

TOG regions lie at residues 1-240 and 264-515; these read MGDD…DLKA and VDAY…KETK. HEAT repeat units follow at residues 120-157, 160-197, 270-311, 314-352, 356-393, 395-432, and 436-477; these read EKAE…EFGS, MTLK…WIRD, LEAV…NPKI, GDFA…GLRK, SYAG…TTTL, NISE…STLP, and LKPF…VNPF. A disordered region spans residues 500–574; it reads NGKKGGAAAG…GATAKGKKAV (75 aa). The span at 538–568 shows a compositional bias: low complexity; sequence KAAAAPKKAPAAKPGGPVKKAKAPASSGATA. Residues 644–808 are TOG 3; the sequence is KPGFKETNFQ…LSQIDAEFEK (165 aa). HEAT repeat units lie at residues 652 to 689 and 748 to 785; these read FQVM…KVGD and INVK…YMGA. Residues 809 to 849 form a disordered region; that stretch reads MKGQTPPVSIRGSKHGSGRDEGEEGEEQDEDAPADVTDLLP. Positions 829-841 are enriched in acidic residues; that stretch reads EGEEGEEQDEDAP. Residues 846–1090 are TOG 4; it reads DLLPRTDISD…AGPPGKASSK (245 aa). 4 HEAT repeats span residues 852 to 889, 892 to 929, 933 to 970, and 1015 to 1052; these read DISD…EAKF, PSIG…AMGH, QHVK…QTGM, and CVPY…KMSK. Over residues 1074-1115 the composition is skewed to low complexity; sequence ASMPAKPAGPPGKASSKQPPAVAQASASPPPAASSDSGSSTS. The segment at 1074-1192 is disordered; it reads ASMPAKPAGP…AKDEEDKSGP (119 aa). Over residues 1126 to 1163 the composition is skewed to polar residues; it reads PGTQASKAKTQSVSSEGNTSLNPSNTSLTPSKANTSLS. The interval 1150–1235 is interaction with microtubule lattice; that stretch reads NTSLTPSKAN…IEQLKTQMSP (86 aa). Residues 1191-1460 form a TOG 5 region; sequence GPIYIIVPNG…ERIKRAGKKQ (270 aa). HEAT repeat units follow at residues 1251-1288, 1295-1318, 1319-1355, 1357-1390, and 1395-1432; these read QRQI…RFFD, MKCL…LTEM, EGTS…VYPA, KMFN…SYGM, and PTPA…VHGE. Disordered stretches follow at residues 1982 to 2001 and 2028 to 2065; these read DNAK…KSSA and VELD…SSRK. The tract at residues 2002-2065 is interaction with tacc3; it reads PAVVSSTDML…RLERIKSSRK (64 aa). Positions 2038–2048 are enriched in low complexity; it reads STTTSSSASST. A compositionally biased stretch (basic and acidic residues) spans 2051 to 2065; sequence DDLKKRLERIKSSRK.

Belongs to the TOG/XMAP215 family. As to quaternary structure, interacts with tacc3; two molecules of ckap5 interact with 1 molecule of tacc3 probably mediated by coiled coil domains forming a four-helix bundle. Interacts with tacc3 and clathrin forming the TACC3/ch-TOG/clathrin complex located at spindle inter-microtubules bridges. Interacts with ndc80; indicative for an association with the NDC80 comnplex.

It localises to the cytoplasm. The protein resides in the cytoskeleton. It is found in the spindle pole. The protein localises to the spindle. Its subcellular location is the microtubule organizing center. It localises to the centrosome. The protein resides in the chromosome. It is found in the centromere. The protein localises to the kinetochore. In terms of biological role, binds to the plus end of microtubules and regulates microtubule dynamics and microtubule organization. Acts as a processive microtubule polymerase. Promotes cytoplasmic microtubule nucleation and elongation. Plays a major role in organizing spindle poles. In spindle formation protects kinetochore microtubules from depolymerization by kif2c and has an essential role in centrosomal microtubule assembly independently of kif2c activity. Contributes to centrosome integrity. Acts as a component of the TACC3/ch-TOG/clathrin complex proposed to contribute to stabilization of kinetochore fibers of the mitotic spindle by acting as inter-microtubule bridge. Enhances the strength of NDC80 complex-mediated kinetochore-tip microtubule attachments. This is Cytoskeleton-associated protein 5-A (ckap5-a) from Xenopus laevis (African clawed frog).